A 373-amino-acid chain; its full sequence is 3 beta-hydroxysteroid dehydrogenase/Delta 5--&gt;4-isomerase (373 aa).

Tyr155 acts as the Proton acceptor in catalysis. Position 159 (Lys159) interacts with NAD(+). Residues 288–308 (IFLKYWLAFLLEIVSFLLSPI) form a helical membrane-spanning segment.

It belongs to the 3-beta-HSD family.

Its subcellular location is the endoplasmic reticulum membrane. It is found in the mitochondrion membrane. The catalysed reaction is a 3beta-hydroxy-Delta(5)-steroid + NAD(+) = a 3-oxo-Delta(5)-steroid + NADH + H(+). The enzyme catalyses a 3-oxo-Delta(5)-steroid = a 3-oxo-Delta(4)-steroid. It participates in lipid metabolism; steroid biosynthesis. 3-beta-HSD is a bifunctional enzyme, that catalyzes the oxidative conversion of Delta(5)-ene-3-beta-hydroxy steroid, and the oxidative conversion of ketosteroids. The 3-beta-HSD enzymatic system plays a crucial role in the biosynthesis of all classes of hormonal steroids. The chain is 3 beta-hydroxysteroid dehydrogenase/Delta 5--&gt;4-isomerase (HSD3B) from Equus caballus (Horse).